Here is a 276-residue protein sequence, read N- to C-terminus: MALKKVLTIAGSDTSAGAGMQADLKTFQELDTYGMVALTAIVTMDKDTWSHDVTPLPMDVFEKQLETALSIGPDAIKTGMLGTEEIIKRAGEVYEASNAQYFVVDPVMVCKGEDEVLNPGNTEAMIKYLLPKATVVTPNLFEAGQLSGLGKLNSIEDMKKAATIIFDKGAQHVIIKGGKALDQDKSYDLYYDGQTFYQLTTDMFQQSYNHGAGCTFAAATTAYLANGKSPKEAVISAKAFVASAIKNGWKMNDFVGPVDHGAYNRIEHIDVEVTEV.

Asn139 provides a ligand contact to ATP. Glu142 serves as a coordination point for Mg(2+). ATP contacts are provided by residues 176 to 180, Asp188, Gly213, and Lys238; that span reads KGGKA.

It belongs to the ThiD family.

It catalyses the reaction pyridoxal + ATP = pyridoxal 5'-phosphate + ADP + H(+). Functionally, phosphorylates B6 vitamers; functions in a salvage pathway. Uses pyridoxal, pyridoxine, and pyridoxamine as substrates. This is Putative pyridoxine kinase (pdxK) from Staphylococcus aureus (strain COL).